The following is a 699-amino-acid chain: Elongation factor G (699 aa).

In terms of domain architecture, tr-type G spans 8 to 288; sequence EDYRNFGIMA…AVVDYLPSPV (281 aa). GTP-binding positions include 17–24, 86–90, and 140–143; these read AHIDAGKT, DTPGH, and NKMD.

This sequence belongs to the TRAFAC class translation factor GTPase superfamily. Classic translation factor GTPase family. EF-G/EF-2 subfamily.

The protein localises to the cytoplasm. Functionally, catalyzes the GTP-dependent ribosomal translocation step during translation elongation. During this step, the ribosome changes from the pre-translocational (PRE) to the post-translocational (POST) state as the newly formed A-site-bound peptidyl-tRNA and P-site-bound deacylated tRNA move to the P and E sites, respectively. Catalyzes the coordinated movement of the two tRNA molecules, the mRNA and conformational changes in the ribosome. In Sinorhizobium medicae (strain WSM419) (Ensifer medicae), this protein is Elongation factor G.